The sequence spans 558 residues: Putative ABC transporter ATP-binding protein SMU_1934c (558 aa).

ABC transporter domains are found at residues 5 to 246 and 295 to 527; these read IEFK…GIRE and FDIQ…ANLK. ATP is bound by residues 39–46 and 328–335; these read GPSGSGKS and GKNGAGKS.

This sequence belongs to the ABC transporter superfamily.

The protein localises to the cell membrane. In terms of biological role, probably part of an ABC transporter complex. Responsible for energy coupling to the transport system. This is Putative ABC transporter ATP-binding protein SMU_1934c (sdcBA) from Streptococcus mutans serotype c (strain ATCC 700610 / UA159).